Here is a 1043-residue protein sequence, read N- to C-terminus: Unconventional myosin-Ia (1043 aa).

The region spanning 8–694 (VGVEDLVLLE…TLFYLEEQRR (687 aa)) is the Myosin motor domain. Residue 101 to 108 (GESGSGKT) coordinates ATP. The actin-binding stretch occupies residues 571–593 (VAILMKNLYSKSPNYIRCIKPNE). 3 IQ domains span residues 697-719 (LQQL…HYQL), 720-742 (MRKS…CYGK), and 743-772 (IKAS…SEAA). The TH1 domain occupies 858 to 1042 (KASYPQSVPI…KGSHCLEVTV (185 aa)).

This sequence belongs to the TRAFAC class myosin-kinesin ATPase superfamily. Myosin family. In terms of processing, phosphorylated by ALPK1.

Involved in directing the movement of organelles along actin filaments. This chain is Unconventional myosin-Ia (MYO1A), found in Homo sapiens (Human).